Reading from the N-terminus, the 562-residue chain is NAD-dependent malic enzyme (562 aa).

The active-site Proton donor is Tyr101. Residue Arg154 coordinates NAD(+). The active-site Proton acceptor is the Lys172. A divalent metal cation-binding residues include Glu243, Asp244, and Asp267. Residues Asp267 and Asn415 each contribute to the NAD(+) site.

This sequence belongs to the malic enzymes family. Homotetramer. Mg(2+) is required as a cofactor. Mn(2+) serves as cofactor.

The enzyme catalyses (S)-malate + NAD(+) = pyruvate + CO2 + NADH. It catalyses the reaction oxaloacetate + H(+) = pyruvate + CO2. The sequence is that of NAD-dependent malic enzyme from Shewanella sp. (strain MR-4).